Consider the following 201-residue polypeptide: Imidazole glycerol phosphate synthase subunit HisH (201 aa).

Residues 1–201 (MIIVIDYDAG…ILKKFVDLCD (201 aa)) form the Glutamine amidotransferase type-1 domain. C79 serves as the catalytic Nucleophile. Residues H181 and E183 contribute to the active site.

In terms of assembly, heterodimer of HisH and HisF.

The protein localises to the cytoplasm. It carries out the reaction 5-[(5-phospho-1-deoxy-D-ribulos-1-ylimino)methylamino]-1-(5-phospho-beta-D-ribosyl)imidazole-4-carboxamide + L-glutamine = D-erythro-1-(imidazol-4-yl)glycerol 3-phosphate + 5-amino-1-(5-phospho-beta-D-ribosyl)imidazole-4-carboxamide + L-glutamate + H(+). The enzyme catalyses L-glutamine + H2O = L-glutamate + NH4(+). It participates in amino-acid biosynthesis; L-histidine biosynthesis; L-histidine from 5-phospho-alpha-D-ribose 1-diphosphate: step 5/9. Its function is as follows. IGPS catalyzes the conversion of PRFAR and glutamine to IGP, AICAR and glutamate. The HisH subunit catalyzes the hydrolysis of glutamine to glutamate and ammonia as part of the synthesis of IGP and AICAR. The resulting ammonia molecule is channeled to the active site of HisF. This is Imidazole glycerol phosphate synthase subunit HisH from Streptococcus mutans serotype c (strain ATCC 700610 / UA159).